The sequence spans 757 residues: Transcription regulator rua1 (757 aa).

Disordered regions lie at residues 122–169 (SSGS…LPVS), 181–218 (NHQVTTQDASVQPKLEKQCQPPSHNVNQQNAFASSNQD), 237–295 (RNTG…NGYT), 372–393 (SADCGLLPRPPSNSPEPHPYPL), and 422–582 (MELQ…IGNA). Positions 125-165 (SATKSEPSTCSSSTDFSMSSTADASTAPQHSSSGDSSMSSG) are enriched in low complexity. 2 stretches are compositionally biased toward polar residues: residues 181-190 (NHQVTTQDAS) and 200-218 (QPPSHNVNQQNAFASSNQD). Over residues 240-249 (GHRQHNRHQK) the composition is skewed to basic residues. The span at 253–277 (LPQGQSCTNSGSSSRQVTRPNSPNH) shows a compositional bias: polar residues. The span at 379 to 393 (PRPPSNSPEPHPYPL) shows a compositional bias: pro residues. Residues 428–437 (PARSNSTFGR) show a composition bias toward polar residues. Positions 439 to 453 (SQRHHQPPPSHRQRS) are enriched in basic residues. 3 stretches are compositionally biased toward low complexity: residues 454-465 (RTSASSISNTNA), 494-510 (ASQSPSSPSESTAATDA), and 543-582 (TSSSVSALTSTTTTTVSTGASSVASSISGPSSASSGIGNA). The C2H2-type 1 degenerate zinc finger occupies 661 to 692 (REGWCSLCPQGEWYSMKRSQYLYHMQFDHGIS). The C2H2-type 2; degenerate zinc finger occupies 717-750 (GLCHHCNKWIPICFGPQRKRDFKAWFKHARKCHR).

It is found in the nucleus. Transcription factor; part of the gene cluster that mediates the biosynthesis of the glycolipid biosurfactant ustilagic acid (UA). UA is a secreted cellobiose glycolipid that is toxic for many microorganisms and confers biocontrol activity to U.maydis. Recognizes and binds to the specific 5'-T/G-G/T-C-G-C-A-T-A/T-C/T-C/T-G/A-3' upstream activating sequence found in all promoters of the UA biosynthesis genes. The sequence is that of Transcription regulator rua1 from Mycosarcoma maydis (Corn smut fungus).